Here is a 339-residue protein sequence, read N- to C-terminus: Ketol-acid reductoisomerase (NADP(+)) (339 aa).

The KARI N-terminal Rossmann domain occupies 1–182; it reads MRVYYDRDAD…GGGRAGIIET (182 aa). Residues 24-27, Arg48, Ser51, Thr53, and 83-86 contribute to the NADP(+) site; these read YGSQ and DELQ. His108 is an active-site residue. Gly134 serves as a coordination point for NADP(+). Positions 183–328 constitute a KARI C-terminal knotted domain; the sequence is SFKEECETDL…AKLREMMPWI (146 aa). Mg(2+)-binding residues include Asp191, Glu195, Glu227, and Glu231. Ser252 contributes to the substrate binding site.

This sequence belongs to the ketol-acid reductoisomerase family. It depends on Mg(2+) as a cofactor.

It catalyses the reaction (2R)-2,3-dihydroxy-3-methylbutanoate + NADP(+) = (2S)-2-acetolactate + NADPH + H(+). It carries out the reaction (2R,3R)-2,3-dihydroxy-3-methylpentanoate + NADP(+) = (S)-2-ethyl-2-hydroxy-3-oxobutanoate + NADPH + H(+). The protein operates within amino-acid biosynthesis; L-isoleucine biosynthesis; L-isoleucine from 2-oxobutanoate: step 2/4. It participates in amino-acid biosynthesis; L-valine biosynthesis; L-valine from pyruvate: step 2/4. Functionally, involved in the biosynthesis of branched-chain amino acids (BCAA). Catalyzes an alkyl-migration followed by a ketol-acid reduction of (S)-2-acetolactate (S2AL) to yield (R)-2,3-dihydroxy-isovalerate. In the isomerase reaction, S2AL is rearranged via a Mg-dependent methyl migration to produce 3-hydroxy-3-methyl-2-ketobutyrate (HMKB). In the reductase reaction, this 2-ketoacid undergoes a metal-dependent reduction by NADPH to yield (R)-2,3-dihydroxy-isovalerate. This Rhodopseudomonas palustris (strain BisB5) protein is Ketol-acid reductoisomerase (NADP(+)).